A 187-amino-acid chain; its full sequence is Pyridoxal 5'-phosphate synthase subunit PdxT (187 aa).

47-49 (GES) provides a ligand contact to L-glutamine. Catalysis depends on C76, which acts as the Nucleophile. Residues R102 and 128 to 129 (IR) each bind L-glutamine. Catalysis depends on charge relay system residues H165 and E167.

The protein belongs to the glutaminase PdxT/SNO family. In the presence of PdxS, forms a dodecamer of heterodimers. Only shows activity in the heterodimer.

The catalysed reaction is aldehydo-D-ribose 5-phosphate + D-glyceraldehyde 3-phosphate + L-glutamine = pyridoxal 5'-phosphate + L-glutamate + phosphate + 3 H2O + H(+). The enzyme catalyses L-glutamine + H2O = L-glutamate + NH4(+). It functions in the pathway cofactor biosynthesis; pyridoxal 5'-phosphate biosynthesis. Catalyzes the hydrolysis of glutamine to glutamate and ammonia as part of the biosynthesis of pyridoxal 5'-phosphate. The resulting ammonia molecule is channeled to the active site of PdxS. The sequence is that of Pyridoxal 5'-phosphate synthase subunit PdxT from Methanococcus maripaludis (strain DSM 14266 / JCM 13030 / NBRC 101832 / S2 / LL).